The chain runs to 1499 residues: MAMQPSYPAPFGAAAISSSAGQEVASTIRRQFTDADADRIVETPLGEKADSSDTAGPDSEDGIDQEGHDKITALARSLSQISQKSAGPTNTFLDPSSDPELDPNSDKFSSRKWMKNLLHIKTRDPDRYPRRTAGVSFRNLNAYGYGTAADYQADVANMWLKGFGWLRSILGCRNRVQIDILRNFEGFVRSGEMLVVLGRPGSGCSTFLKTIAGETHGLWLDEGTHIQYEGISWDEMHSRFRGEVIYQAETEIHFPQLTAGETLLFAAQARTPANRFPGVSREQYATHMRDVVMTMLGLSHTVNTRIGNEYIRGVSGGERKRVSIAETILCGCPLQCWDNSTRGLDSSTALEFVKNLRLSTDYTGSTAIVAIYQASQAIYDIFDKVIVLYEGRQIYFGKASDAKRFFIDMGFDCPDRQTTGDFLTSLTSPSERLVRKGYEALVPRTPDEFAARWRESAERQRLLADIEAFENESPLGGSKYKEFTVSRAAEKAKGTRAPSPYTLSYPMQIRLCLRRGFLRLKGDMSMTLATVIGNSIMAFIVSSVFYNLDQTTNSFFSRGALLFFAILLNAFASSLEILTLWQQRPIVEKHDKYALYHPSAEAISSMIVDLPSKFLVSVVFNLILYFMTNLRRTPGHFFVFYLFSVTITLTMSNIFRWIGAISRSMAQAMVPSSIFMMILVIYTGFTIPVRDMHPWFKWLNYLNPIGYAFESLMINEFSDRRFPCAQYVPAGPGYEDVPLSSKICSQKGAVAGQDYVDGDAFINTSYRYFSSHLWRNYGIILGFFFFFLAAYIICSELVRAKPSKGEILVFPRGKIPAFVKKSRRDGDLEGAPTFEKQQLDNAGHDSTAAIVKQTSIFHWQDVCYDIKVKGETRRILDHIDGWVKPGTLTALMGVTGAGKTSLLDVLANRVTMGVITGEMLVDGRMRDDSFQRKTGYVQQQDLHLETSTVREALIFSATLRQPASTPHKEKLAYVEEVIKMLNMEEYAEAVVGVLGEGLNVEQRKRLTIGVELAAKPALLCFFDEPTSGLDSQTAWSICTLMRKLADHGQAILCTIHQPSAILMQQFDRLLFLAKGGKTVYFGELGPNMETLIKYFENKGSSKCPKNANPAEWMLEVIGAAPGSHADQDWPEVWNNSPERAQVRAELARMKEELLQRPPPPRTKEYGEFAMPLWAQFLVCLQRMFQQYWRSPSYIYSKAATSIIPPLFIGFTFWREPTSLQGLQNQMFAIFMLLVIFPNLVQQMMPYFVTQRALYEVRERPSKAYSWKAFMLASILVELPWNILMAVPAYFCWYYPIGLYRNAYPTDSVTERGGTMFLLILIFMMFTSTFSSMIIAGIEQPETGGNIAQLLFSLCLIFNGVLASPSALPGFWIFMYRVSPFTYLVSAVLSVGLAGTSVKCSDIEILHVPPPQGQNCSSFLDAYVQMSHGRLLNPEATSDCQVCPVADTDTFLAQVSISYSDRWRNVGLLFVYIVFNIFAAIFLYWLIRVPKKRSRKIKEE.

Disordered stretches follow at residues 1-66 (MAMQ…IDQE) and 80-107 (QISQKSAGPTNTFLDPSSDPELDPNSDK). Polar residues predominate over residues 16–30 (ISSSAGQEVASTIRR). Basic and acidic residues predominate over residues 31 to 51 (QFTDADADRIVETPLGEKADS). Residues 80 to 94 (QISQKSAGPTNTFLD) show a composition bias toward polar residues. Residues 166-415 (LRSILGCRNR…FIDMGFDCPD (250 aa)) enclose the ABC transporter 1 domain. Residue Asn-339 is glycosylated (N-linked (GlcNAc...) asparagine). Transmembrane regions (helical) follow at residues 526 to 546 (MTLATVIGNSIMAFIVSSVFY), 561 to 581 (LLFFAILLNAFASSLEILTLW), 606 to 626 (MIVDLPSKFLVSVVFNLILYF), 635 to 655 (GHFFVFYLFSVTITLTMSNIF), and 669 to 689 (MVPSSIFMMILVIYTGFTIPV). Residue Asn-763 is glycosylated (N-linked (GlcNAc...) asparagine). A helical membrane pass occupies residues 778 to 798 (GIILGFFFFFLAAYIICSELV). In terms of domain architecture, ABC transporter 2 spans 857 to 1100 (FHWQDVCYDI…LIKYFENKGS (244 aa)). 893-900 (GVTGAGKT) provides a ligand contact to ATP. Transmembrane regions (helical) follow at residues 1193-1213 (YIYSKAATSIIPPLFIGFTFW), 1227-1247 (FAIFMLLVIFPNLVQQMMPYF), 1268-1288 (AFMLASILVELPWNILMAVPA), 1317-1337 (LLILIFMMFTSTFSSMIIAGI), and 1353-1373 (LCLIFNGVLASPSALPGFWIF). Asn-1414 carries N-linked (GlcNAc...) asparagine glycosylation. Residues 1466–1486 (GLLFVYIVFNIFAAIFLYWLI) traverse the membrane as a helical segment.

The protein belongs to the ABC transporter superfamily. ABCG family. PDR (TC 3.A.1.205) subfamily.

It is found in the cell membrane. It catalyses the reaction itraconazole(in) + ATP + H2O = itraconazole(out) + ADP + phosphate + H(+). The enzyme catalyses voriconazole(in) + ATP + H2O = voriconazole(out) + ADP + phosphate + H(+). With respect to regulation, the efflux inhibitor FK506 impairs the transport activity. In terms of biological role, pleiotropic ABC efflux transporter that confers resistance to structurally and functionally unrelated compounds including azoles such as itraconazole, posaconazole, and voriconazole. The sequence is that of ABC multidrug transporter A-2 from Aspergillus fumigatus (strain ATCC MYA-4609 / CBS 101355 / FGSC A1100 / Af293) (Neosartorya fumigata).